A 530-amino-acid chain; its full sequence is Probable glycerol-3-phosphate acyltransferase 2 (530 aa).

Transmembrane regions (helical) follow at residues 70 to 90 (YFMV…LLVL), 93 to 113 (FISL…SFFG), and 275 to 295 (LVLF…LVFG). An HXXXXD motif motif is present at residues 339-344 (HRTLLD).

Belongs to the GPAT/DAPAT family. As to expression, weakly or not expressed in roots, leaves, seedlings, developing siliques and flower buds.

The protein resides in the membrane. It carries out the reaction sn-glycerol 3-phosphate + an acyl-CoA = a 1-acyl-sn-glycero-3-phosphate + CoA. Its pathway is phospholipid metabolism; CDP-diacylglycerol biosynthesis; CDP-diacylglycerol from sn-glycerol 3-phosphate: step 1/3. Functionally, esterifies acyl-group from acyl-ACP to the sn-1 position of glycerol-3-phosphate, an essential step in glycerolipid biosynthesis. The polypeptide is Probable glycerol-3-phosphate acyltransferase 2 (GPAT2) (Arabidopsis thaliana (Mouse-ear cress)).